Here is a 443-residue protein sequence, read N- to C-terminus: Trigger factor (443 aa).

Residues 163-249 (KDAAIIDYQA…LKSLKEEILP (87 aa)) form the PPIase FKBP-type domain.

This sequence belongs to the FKBP-type PPIase family. Tig subfamily.

It is found in the cytoplasm. The catalysed reaction is [protein]-peptidylproline (omega=180) = [protein]-peptidylproline (omega=0). Functionally, involved in protein export. Acts as a chaperone by maintaining the newly synthesized protein in an open conformation. Functions as a peptidyl-prolyl cis-trans isomerase. This chain is Trigger factor, found in Desulfosudis oleivorans (strain DSM 6200 / JCM 39069 / Hxd3) (Desulfococcus oleovorans).